Reading from the N-terminus, the 283-residue chain is Diaminopimelate epimerase (283 aa).

The substrate site is built by Asn13 and Asn67. The active-site Proton donor is the Cys76. Substrate is bound by residues 77–78, Asn166, Asn199, and 217–218; these read GN and ER. Residue Cys226 is the Proton acceptor of the active site. 227–228 is a binding site for substrate; the sequence is GT.

This sequence belongs to the diaminopimelate epimerase family. In terms of assembly, homodimer.

Its subcellular location is the cytoplasm. The catalysed reaction is (2S,6S)-2,6-diaminopimelate = meso-2,6-diaminopimelate. The protein operates within amino-acid biosynthesis; L-lysine biosynthesis via DAP pathway; DL-2,6-diaminopimelate from LL-2,6-diaminopimelate: step 1/1. Functionally, catalyzes the stereoinversion of LL-2,6-diaminopimelate (L,L-DAP) to meso-diaminopimelate (meso-DAP), a precursor of L-lysine and an essential component of the bacterial peptidoglycan. The polypeptide is Diaminopimelate epimerase (Desulforapulum autotrophicum (strain ATCC 43914 / DSM 3382 / VKM B-1955 / HRM2) (Desulfobacterium autotrophicum)).